Here is a 30-residue protein sequence, read N- to C-terminus: Rothein 3.1 (30 aa).

L30 carries the leucine amide modification.

As to expression, expressed by the skin dorsal glands.

Its subcellular location is the secreted. Lacks antimicrobial activity. Does not inhibit the formation of NO by neuronal nitric oxide. This is Rothein 3.1 from Litoria rothii (Roth's tree frog).